Reading from the N-terminus, the 416-residue chain is Adenylosuccinate synthetase (416 aa).

Residues 13–19 (GDEGKGK) and 41–43 (GHT) contribute to the GTP site. D14 acts as the Proton acceptor in catalysis. 2 residues coordinate Mg(2+): D14 and G41. IMP contacts are provided by residues 14–17 (DEGK), 39–42 (NAGH), T126, R140, Q220, T235, and R299. The active-site Proton donor is H42. Substrate is bound at residue 295–301 (VSTGRKR). GTP-binding positions include R301, 327 to 329 (KLD), and 405 to 407 (STS).

It belongs to the adenylosuccinate synthetase family. In terms of assembly, homodimer. Requires Mg(2+) as cofactor.

It localises to the cytoplasm. It catalyses the reaction IMP + L-aspartate + GTP = N(6)-(1,2-dicarboxyethyl)-AMP + GDP + phosphate + 2 H(+). It participates in purine metabolism; AMP biosynthesis via de novo pathway; AMP from IMP: step 1/2. Its function is as follows. Plays an important role in the de novo pathway of purine nucleotide biosynthesis. Catalyzes the first committed step in the biosynthesis of AMP from IMP. The polypeptide is Adenylosuccinate synthetase (Campylobacter jejuni subsp. jejuni serotype O:2 (strain ATCC 700819 / NCTC 11168)).